Reading from the N-terminus, the 172-residue chain is Ribosome maturation factor RimM (172 aa).

The region spanning 93–167 (DEHEFYYHEI…RVVITPIPGM (75 aa)) is the PRC barrel domain.

It belongs to the RimM family. As to quaternary structure, binds ribosomal protein uS19.

The protein localises to the cytoplasm. An accessory protein needed during the final step in the assembly of 30S ribosomal subunit, possibly for assembly of the head region. Essential for efficient processing of 16S rRNA. May be needed both before and after RbfA during the maturation of 16S rRNA. It has affinity for free ribosomal 30S subunits but not for 70S ribosomes. In Exiguobacterium sp. (strain ATCC BAA-1283 / AT1b), this protein is Ribosome maturation factor RimM.